Reading from the N-terminus, the 183-residue chain is Threonylcarbamoyl-AMP synthase (183 aa).

In terms of domain architecture, YrdC-like spans 1–183; the sequence is MNREQIAEAL…LRTNQLFRQG (183 aa).

The protein belongs to the SUA5 family. TsaC subfamily.

The protein resides in the cytoplasm. The catalysed reaction is L-threonine + hydrogencarbonate + ATP = L-threonylcarbamoyladenylate + diphosphate + H2O. Required for the formation of a threonylcarbamoyl group on adenosine at position 37 (t(6)A37) in tRNAs that read codons beginning with adenine. Catalyzes the conversion of L-threonine, HCO(3)(-)/CO(2) and ATP to give threonylcarbamoyl-AMP (TC-AMP) as the acyladenylate intermediate, with the release of diphosphate. This is Threonylcarbamoyl-AMP synthase from Haemophilus influenzae (strain 86-028NP).